A 602-amino-acid chain; its full sequence is Sodium-independent sulfate anion transporter (602 aa).

Residues 1-47 lie on the Extracellular side of the membrane; sequence MSPPMSPMKPPKGFAPMSCCWSTETMQKWLPFLGWLPDYTWYALKMD. The chain crosses the membrane as a helical span at residues 48-68; that stretch reads FIAGISVGLTVIPQALAYAEV. Ala-69 is a topological domain (cytoplasmic). Residues 70 to 90 form a helical membrane-spanning segment; sequence GLPPQYGLYSAFMGCFVYFFL. Residues 91–115 are Extracellular-facing; it reads GTSRDVTLGPTAIMSLLVSFYTFHE. The helical transmembrane segment at 116 to 136 threads the bilayer; the sequence is PAYAVLLAFLTGCIQLGMGFL. Residues 137–143 lie on the Cytoplasmic side of the membrane; sequence RLGLLLD. Residues 144–164 form a helical membrane-spanning segment; sequence FISCPVIKGFTSAAAIIIGFG. The Extracellular segment spans residues 165-193; it reads QIKNLLGLQHIPRQFFLQVYYTFHNIGET. The chain crosses the membrane as a helical span at residues 194 to 214; it reads RVGDAVLGLVCMVLLLVLKLM. Topologically, residues 215–246 are cytoplasmic; that stretch reads RDHVPPVHPEMPTGVRLSHGLVWTATTARNAL. Residues 247-267 form a helical membrane-spanning segment; that stretch reads VVSFAALVAYSFQVTGYQPFV. Residues 268–300 are Extracellular-facing; the sequence is LTGKTPEGLPDAHIPPFSVTTANGTISFTEMVQ. A helical membrane pass occupies residues 301–321; the sequence is GMGAGLVVVPLMGLLESIAVA. The Cytoplasmic segment spans residues 322–337; sequence KSFASQNNYRINSNQE. A helical transmembrane segment spans residues 338-358; sequence LLALGFTNILGSLFSSYPVTG. The Extracellular segment spans residues 359–370; it reads SFGRTAVNAQSG. A helical membrane pass occupies residues 371 to 391; that stretch reads VCTPAGGLMTGALVLLSLDYL. At 392–394 the chain is on the cytoplasmic side; the sequence is TSL. The chain crosses the membrane as a helical span at residues 395-415; that stretch reads FYYIPKSALAAVIIMAVVPLF. Topologically, residues 416–438 are extracellular; that stretch reads DTKIVKTLWRVKRLDLLPLCVTF. A helical membrane pass occupies residues 439–459; sequence LLCFWEVQYGILAGTLVSVLI. Residues 460–602 are Cytoplasmic-facing; the sequence is LLHSVARPKI…PEHKIALLKA (143 aa). The region spanning 466–580 is the STAS domain; sequence RPKIQVSEGP…EAEKYLKQEP (115 aa).

Belongs to the SLC26A/SulP transporter (TC 2.A.53) family.

It localises to the cell membrane. Its subcellular location is the lysosome membrane. The protein localises to the apical cell membrane. The protein resides in the basolateral cell membrane. It carries out the reaction hydrogencarbonate(in) + chloride(out) = hydrogencarbonate(out) + chloride(in). The enzyme catalyses sulfate(in) + H(+)(in) = sulfate(out) + H(+)(out). It catalyses the reaction oxalate(in) + chloride(out) = oxalate(out) + chloride(in). In terms of biological role, sodium-independent anion exchanger mediating bicarbonate, chloride, sulfate and oxalate transport. Exhibits sodium-independent sulfate anion transporter activity that may cooperate with SLC26A2 to mediate DIDS-sensitive sulfate uptake into high endothelial venules endothelial cells (HEVEC). In the kidney, mediates chloride-bicarbonate exchange, facilitating V-ATPase-mediated acid secretion. May function as a chloride channel, playing an important role in moderating chloride homeostasis and neuronal activity in the cerebellum. This chain is Sodium-independent sulfate anion transporter, found in Bos taurus (Bovine).